The sequence spans 248 residues: Uracil-DNA glycosylase (248 aa).

Catalysis depends on Asp85, which acts as the Proton acceptor.

The protein belongs to the uracil-DNA glycosylase (UDG) superfamily. UNG family.

The protein resides in the cytoplasm. It carries out the reaction Hydrolyzes single-stranded DNA or mismatched double-stranded DNA and polynucleotides, releasing free uracil.. Its function is as follows. Excises uracil residues from the DNA which can arise as a result of misincorporation of dUMP residues by DNA polymerase or due to deamination of cytosine. The chain is Uracil-DNA glycosylase from Deinococcus deserti (strain DSM 17065 / CIP 109153 / LMG 22923 / VCD115).